The following is a 1499-amino-acid chain: MTSWLPQNLQKRLLLYTIKQVSLFSNVDVSNLDVSIGSQSHFGFTDIDLNVCEINLPNIEVLSGRISKLNLQLAVAGNVEISGEGMVFVLKPADGFFDDDSSEQWASSLTKSVMDMTKSILDTELSEYQSKIYKDTNEDIKPPTALDSMMDKVLRVALSKLTINLKNVELQLIISPELMLKISISEVKMISADEKRIADVIGVSAVFSKPEQSVPSYGSSSSDKEDDNTSDSEDPLSTSITYSKLEATSIYLSAMESLVLDSLDGETYQFLNIDKIEVQFQGITSINDLKVHDLKIKINALDIHLENVSSILSHIMSLLNHVQLSNSEDKIRTQELKSYKRFQHEQNIEEDKTLTFVLLNSLKFHLRDNLFIMLTEISLNSSVSPYTSVSISDIQLVLDSKEYINRSDSSEPFLSLNKNSSTSEQKLHLNRDIKVEVDYSLMKQLILFANDYMCLYNQIIERPSTYADPSADPKFLLSSQNVCFLLNLGDLIMEFHFSPFFSNIPHTTFKIPKLSIFSVQNNEKSHIGELTDFEFHSRKSGCFNISGANSKFCASNVNTKTKATLENLEVSILESDMNKIIQCLSGVLGSLPELLLSSGETTSSKNMEKRSVRMMQSSAFLHNRTALSMFCVQINCMKIKISNISGKAFGDLMITARKSLIYQDKYSDLSISFTEFTAQRQYRSEKTDIIFDINHDSNIANFVINRTKVGKIKAYLTGVGIFIHTKWSELFSGQKTENSINEQKKNAKTLVSIPIDIKLYDCALSLKPCRLSTGLAINIPRAQINITKNEITLSTKILDLLLIDDMNLIHETDLGHTTSTSNWYEKQGYSSLVKIDTLSVRFCPGGVASTRVNVHKIDSSICSDSFNALIQTIIDLKPVVTYPENVKYQLEPELVSVFEDLTDQYFTTARISENDLEIYPDTYSNSGESLVFEENYFSPKLESPSKNEVNMAVFEILSNVKISVDEIKLKLYDGYDWKHTRKEINSAVEQLEENFKDGLSCPDAKVFDSIYIPAPRDEDENIKSNINMKIHNEETKEGKMKLRPTKKYKILIQGNGIKVNIQSGNDELRTTSTLPLSDNTYDILNETSVQINNLEIVDNLPTSTWNKFLTRTKLKTTNTLQQSPMFSLRFTMIRPTPHLYATELIFSVHVKPISLHVDQDALEFLTLFFQFKDPRFELIDDYPDIPYIQRFEINSVKILLDYKPKKVDYVGLRSGKTKEFMNFFILDQAKINLKHVILYGIDGFSRLETILTDIWTPDITKTQLPGILGALTPFKPFAGLSYGARALVSVPTEQYQQSGRLGTSLQKGGMVFLRTTGGEFVKLAVRLTSGTQTILESTEKLLGGQGSNGRNIKIKLVEGDEIVDAFIDESILRSTTLFDNTANDNNHLDVILPQGDTQKVISLYADQPKDFYSGLHDAYSSFGRNLNITFDSMKQAKNDIKTANGAQEAVSTVAKAAPLALIRPLIGVTEALSKTLQGLNNQYDQEEIAHIEEKYKSSN.

Residues 211 to 221 are compositionally biased toward polar residues; it reads EQSVPSYGSSS. Positions 211 to 237 are disordered; sequence EQSVPSYGSSSSDKEDDNTSDSEDPLS. Over residues 224–234 the composition is skewed to acidic residues; the sequence is KEDDNTSDSED.

It belongs to the ATG2 family.

The protein resides in the preautophagosomal structure membrane. Its subcellular location is the endoplasmic reticulum membrane. It carries out the reaction a 1,2-diacyl-sn-glycero-3-phosphocholine(in) = a 1,2-diacyl-sn-glycero-3-phosphocholine(out). The catalysed reaction is a 1,2-diacyl-sn-glycero-3-phospho-L-serine(in) = a 1,2-diacyl-sn-glycero-3-phospho-L-serine(out). It catalyses the reaction a 1,2-diacyl-sn-glycero-3-phosphoethanolamine(in) = a 1,2-diacyl-sn-glycero-3-phosphoethanolamine(out). Functionally, lipid transfer protein required for autophagosome completion and peroxisome degradation. Tethers the edge of the isolation membrane (IM) to the endoplasmic reticulum (ER) and mediates direct lipid transfer from ER to IM for IM expansion. ATG2 binds to the ER exit site (ERES), which is the membrane source for autophagosome formation, using basic residues in its N-terminal region (NR) and to the expanding edge of the IM through its C-terminal region. The latter binding is assisted by an ATG18-PtdIns3P interaction. ATG2 then extracts phospholipids from the membrane source using its NR and transfers them to ATG9 to the IM through its predicted beta-sheet-rich structure for membrane expansion. This is Autophagy-related protein 2 from Kluyveromyces marxianus (strain DMKU3-1042 / BCC 29191 / NBRC 104275) (Yeast).